Reading from the N-terminus, the 229-residue chain is Histone H3-like centromeric protein CSE4 (229 aa).

Polar residues predominate over residues Met1–Asn35. A disordered region spans residues Met1 to Ala78. A compositionally biased stretch (basic and acidic residues) spans Pro53–Leu68. Positions Lys115–Tyr132 match the Nuclear localization signal motif. The tract at residues Tyr132–Ile229 is H3-like.

Belongs to the histone H3 family. In terms of assembly, component of centromeric nucleosomes, where DNA is wrapped around a histone octamer core. The octamer contains two molecules each of H2A, H2B, CSE4/CENPA and H4 assembled in one CSE4-H4 heterotetramer and two H2A-H2B heterodimers. Interacts with the inner kinetochore. Interacts with the central kinetochore protein CTF19. Interacts with YTA7. In terms of processing, ubiquitinated. Is degraded through ubiquitin-mediated proteolysis when not protected by its association to the kinetochore.

It is found in the nucleus. The protein localises to the chromosome. The protein resides in the centromere. Its function is as follows. Histone H3-like nucleosomal protein that is specifically found in centromeric nucleosomes. Replaces conventional H3 in the nucleosome core of centromeric chromatin that serves as an assembly site for the inner kinetochore. Required for recruitment and assembly of kinetochore proteins, mitotic progression and chromosome segregation. May serve as an epigenetic mark that propagates centromere identity through replication and cell division. Required for functional chromatin architecture at the yeast 2-micron circle partitioning locus and promotes equal plasmid segregation. The sequence is that of Histone H3-like centromeric protein CSE4 (CSE4) from Saccharomyces cerevisiae (strain ATCC 204508 / S288c) (Baker's yeast).